The chain runs to 939 residues: Protein translocase subunit SecA 1 (939 aa).

Residues Gln-85, Gly-103–Thr-107, and Asp-504 contribute to the ATP site. Positions Glu-848–Lys-939 are disordered. 3 stretches are compositionally biased toward basic and acidic residues: residues Glu-852–Ala-863, Pro-872–His-889, and Pro-914–Ala-925. Residues Glu-926–Lys-939 are compositionally biased toward basic residues.

Belongs to the SecA family. Monomer and homodimer. Part of the essential Sec protein translocation apparatus which comprises SecA, SecYEG and auxiliary proteins SecDF. Other proteins may also be involved.

Its subcellular location is the cell membrane. The protein localises to the cytoplasm. The enzyme catalyses ATP + H2O + cellular proteinSide 1 = ADP + phosphate + cellular proteinSide 2.. Functionally, part of the Sec protein translocase complex. Interacts with the SecYEG preprotein conducting channel. Has a central role in coupling the hydrolysis of ATP to the transfer of proteins into and across the cell membrane, serving as an ATP-driven molecular motor driving the stepwise translocation of polypeptide chains across the membrane. In Streptomyces avermitilis (strain ATCC 31267 / DSM 46492 / JCM 5070 / NBRC 14893 / NCIMB 12804 / NRRL 8165 / MA-4680), this protein is Protein translocase subunit SecA 1.